We begin with the raw amino-acid sequence, 1560 residues long: Lysine-specific demethylase 5C (1560 aa).

Residues 14 to 55 (CPVFEPSWAEFRDPLGYIAKIRPIAEKSGICKIRPPADWQPP) form the JmjN domain. An ARID domain is found at 79–169 (TRVKLNYLDQ…IVYPYEMYQS (91 aa)). Residues 197–207 (LRQSVQPSKFN) show a composition bias toward polar residues. A disordered region spans residues 197-227 (LRQSVQPSKFNSYGRRAKRLQPDPEPTEEDI). Glycyl lysine isopeptide (Lys-Gly) (interchain with G-Cter in SUMO2) cross-links involve residues K205, K229, K244, and K274. S287 is subject to Phosphoserine. K295 is covalently cross-linked (Glycyl lysine isopeptide (Lys-Gly) (interchain with G-Cter in SUMO2)). Residues S301 and S317 each carry the phosphoserine modification. A PHD-type 1 zinc finger spans residues 326–372 (VCRMCSRGDEDDKLLLCDGCDDNYHIFCLLPPLPEIPKGVWRCPKCV). Y440 serves as a coordination point for 2-oxoglutarate. Residues 468 to 634 (EYATSGWNLN…AGRQCIEHYR (167 aa)) form the JmjC domain. Residues H514 and E516 each contribute to the Fe cation site. Residues S522, N524, and K532 each coordinate 2-oxoglutarate. H602 contacts Fe cation. A C5HC2 zinc finger spans residues 707–759 (CIKCKTTCFLSALACYDCPDGLVCLSHINDLCKCSSSRQYLRYRYTLDELPAM). S893 and S897 each carry phosphoserine. K1127 is covalently cross-linked (Glycyl lysine isopeptide (Lys-Gly) (interchain with G-Cter in SUMO2)). The segment at 1161–1181 (ILQLRRTNSAKPSPLASSSTA) is disordered. A compositionally biased stretch (low complexity) spans 1169 to 1181 (SAKPSPLASSSTA). The PHD-type 2 zinc-finger motif lies at 1187-1248 (ICVCGQVLAG…DTKFLCPLCM (62 aa)). 2 disordered regions span residues 1316-1371 (QAEP…GSGK) and 1444-1560 (ERHG…QQQL). The segment covering 1335–1345 (PLREGSGKDMP) has biased composition (basic and acidic residues). At S1359 the chain carries Phosphoserine. A compositionally biased stretch (basic residues) spans 1448–1463 (SRARGRALERRRRRKV). A compositionally biased stretch (basic and acidic residues) spans 1464-1481 (DRGGEGDDPAREELEPKR). Residues 1488–1503 (EAEEVQEEEELEEETG) are compositionally biased toward acidic residues. The segment covering 1516 to 1544 (SPSTQENQNGLEPAEGTTSGPSAPFSTLT) has biased composition (polar residues).

The protein belongs to the JARID1 histone demethylase family. As to quaternary structure, part of two distinct complexes, one containing E2F6, and the other containing REST. Interacts with ZMYND8. It depends on Fe(2+) as a cofactor. As to expression, expressed in all tissues examined. Highest levels found in brain and skeletal muscle.

It localises to the nucleus. The catalysed reaction is N(6),N(6),N(6)-trimethyl-L-lysyl(4)-[histone H3] + 3 2-oxoglutarate + 3 O2 = L-lysyl(4)-[histone H3] + 3 formaldehyde + 3 succinate + 3 CO2. Its activity is regulated as follows. The inhibitor KDOAM-25 and others inhibit its demethylase activity, resulting to cell cycle arrest in myeloma cells. In terms of biological role, histone demethylase that specifically demethylates 'Lys-4' of histone H3, thereby playing a central role in histone code. Does not demethylate histone H3 'Lys-9', H3 'Lys-27', H3 'Lys-36', H3 'Lys-79' or H4 'Lys-20'. Demethylates trimethylated and dimethylated but not monomethylated H3 'Lys-4'. Participates in transcriptional repression of neuronal genes by recruiting histone deacetylases and REST at neuron-restrictive silencer elements. Represses the CLOCK-BMAL1 heterodimer-mediated transcriptional activation of the core clock component PER2. This chain is Lysine-specific demethylase 5C, found in Homo sapiens (Human).